The sequence spans 1959 residues: MAQRDADKYLYVDKNIINNPLTQADWAAKKLVWVPSEKSGFEAASLKEEVGDEAIVELAENGKKVKVNKDDIQKMNPPKFSKVEDMAELTCLNEASVLHNLKERYYSGLIYTYSGLFCVVINPYKNLPIYSEEIVEMYKGKKRHEMPPHIYAITDTAYRSMMQDREDQSILCTGESGAGKTENTKKVIQYLAHVASSHKSKKDQGELERQLLQANPILEAFGNAKTVKNDNSSRFGKFIRINFDVNGYIVGANIETYLLEKSRAIRQAKEERTFHIFYYLLSGAGEHLKTDLLLEPYNKYRFLSNGHVTIPGQQDKDMFQETMEAMRIMGIPDEEQIGLLKVISGVLQLGNIVFKKERNTDQASMPDNTAAQKVSHLLGINVTDFTRGILTPRIKVGRDYVQKAQTKEQADFAIEALAKATYEQMFRWLVMRINKALDKTKRQGASFIGILDIAGFEIFELNSFEQLCINYTNEKLQQLFNHTMFILEQEEYQNEGIEWNFIDFGLDLQPCIDLIEKPAGPPGILALLDEECWFPKATDKSFVEKVVQEQGTHPKFQKPKQLKDKADFCIIHYAGKVDYKADEWLMKNMDPLNDNIATLLHQSSDKFVSELWKDVDRIVGLDQVAGMSETALPGAFKTRKGMFRTVGQLYKEQLAKLMATLRNTNPNFVRCIIPNHEKKAGKLDPHLVLDQLRCNGVLEGIRICRQGFPNRVVFQEFRQRYEILTPNAIPKGFMDGKQACVLMIKALELDSNLYRIGQSKVFFRAGVLAHLEEERDLKITDVIIGFQACCRGYLARKAFAKRQQQLTAMKVLQRNCAAYLKLRNWQWWRLFTKVKPLLQVSRQEEEMMAKEEELIKVKEKQLAAENRLSEMETFQAQLMAEKMQLQEQLQAEAELCAEAEEIRARLTAKKQELEEICHDLEARVEEEEERCQHLQAEKKKMQQNIQELEEQLEEEESARQKLQLEKVTTEAKLKKLEEDVIVLEDQNLKLAKEKKLLEDRMSEFTTNLTEEEEKSKSLAKLKNKHEAMITDLEERLRREEKQRQELEKTRRKLEGDSSDLHDQIAELQAQIAELKIQLSKKEEELQAALARVEEEAAQKNMALKKIRELESQITELQEDLESERASRNKAEKQKRDLGEELEALKTELEDTLDSTAAQQELRSKREQEVTVLKKTLEDEAKTHEAQIQEMRQKHSQAIEELAEQLEQTKRVKANLEKAKQALESERAELSNEVKVLLQGKGDAEHKRKKVDAQLQELQVKFTEGERVKTELAERVNKLQVELDNVTGLLNQSDSKSIKLAKDFSALESQLQDTQELLQEETRLKLSFSTKLKQTEDEKNALKEQLEEEEEAKRNLEKQISVLQQQAVEARKKMDDGLGCLEIAEEAKKKLQKDLESLTQRYEEKIAAYDKLEKTKTRLQQELDDIAVDLDHQRQTVSNLEKKQKKFDQLLAEEKNISAKYAEERDRAEAEAREKETKALSLARALEEAIEQKAELERVNKQFRTEMEDLMSSKDDVGKSVHELEKAKRALEQQVEEMKTQLEELEDELQATEDAKLRLEVNQQAMKAQFDRDLLGRDEQNEEKRKQLIRQVREMEVELEDERKQRSIAVAARKKLELDLKDLESHIDTANKNRDEAIKHVRKLQAQMKDYMRELEDTRTSREEILAQAKENEKKLKSMEAEMIQLQEELAAAERAKRQAQQERDELADEIANSSGKGALAMEEKRRLEARIAQLEEELEEEQGNTEIINDRLKKANLQIDQMNADLNAERSNAQKNENARQQMERQNKELKLKLQEMESAVKSKYKATITALEAKIVQLEEQLDMETKERQAASKQVRRAEKKLKDILLQVDDERRNAEQFKDQADKANMRLKQLKRQLEEAEEEAQRANVRRKLQRELDDATETADAMNREVSSLKSKLRRGDLPFVVTRRLVRKGTGECSDEEVDGKAEAGDAKATE.

In terms of domain architecture, Myosin N-terminal SH3-like spans Ala27–Pro77. The 696-residue stretch at Ser81–Asp776 folds into the Myosin motor domain. ATP is bound at residue Gly174–Thr181. Positions Leu654 to His676 are actin-binding. The 30-residue stretch at Ile779–Ala808 folds into the IQ domain. A coiled-coil region spans residues Leu837 to Leu1925. Disordered regions lie at residues Glu1118–Glu1168, Arg1694–Gly1717, Leu1879–Lys1917, and Lys1936–Glu1959. Composition is skewed to basic and acidic residues over residues Ser1122–Leu1148 and Arg1694–Asp1704. Over residues Asp1947–Glu1959 the composition is skewed to basic and acidic residues.

It belongs to the TRAFAC class myosin-kinesin ATPase superfamily. Myosin family. Myosin is a hexameric protein that consists of 2 heavy chain subunits (MHC), 2 alkali light chain subunits (MLC) and 2 regulatory light chain subunits (MLC-2). Expressed in fibroblasts, brain, lung, kidney, spleen, and skeletal, cardiac and smooth muscles.

It localises to the cytoplasm. The protein resides in the cytoskeleton. It is found in the cell cortex. Its subcellular location is the cytoplasmic vesicle. The protein localises to the secretory vesicle. It localises to the cortical granule. In terms of biological role, cellular myosin that appears to play a role in cytokinesis, cell shape, and specialized functions such as secretion and capping. This Gallus gallus (Chicken) protein is Myosin-9 (MYH9).